Consider the following 155-residue polypeptide: Endoribonuclease YbeY (155 aa).

Zn(2+) contacts are provided by H116, H120, and H126.

The protein belongs to the endoribonuclease YbeY family. Requires Zn(2+) as cofactor.

Its subcellular location is the cytoplasm. In terms of biological role, single strand-specific metallo-endoribonuclease involved in late-stage 70S ribosome quality control and in maturation of the 3' terminus of the 16S rRNA. The sequence is that of Endoribonuclease YbeY from Thermobifida fusca (strain YX).